The sequence spans 236 residues: Biosynthetic peptidoglycan transglycosylase (236 aa).

Residues 12–31 (ALLWFAAGSALVVLVLRWVP) traverse the membrane as a helical segment.

It belongs to the glycosyltransferase 51 family.

Its subcellular location is the cell inner membrane. It catalyses the reaction [GlcNAc-(1-&gt;4)-Mur2Ac(oyl-L-Ala-gamma-D-Glu-L-Lys-D-Ala-D-Ala)](n)-di-trans,octa-cis-undecaprenyl diphosphate + beta-D-GlcNAc-(1-&gt;4)-Mur2Ac(oyl-L-Ala-gamma-D-Glu-L-Lys-D-Ala-D-Ala)-di-trans,octa-cis-undecaprenyl diphosphate = [GlcNAc-(1-&gt;4)-Mur2Ac(oyl-L-Ala-gamma-D-Glu-L-Lys-D-Ala-D-Ala)](n+1)-di-trans,octa-cis-undecaprenyl diphosphate + di-trans,octa-cis-undecaprenyl diphosphate + H(+). It functions in the pathway cell wall biogenesis; peptidoglycan biosynthesis. Its function is as follows. Peptidoglycan polymerase that catalyzes glycan chain elongation from lipid-linked precursors. The protein is Biosynthetic peptidoglycan transglycosylase of Pseudomonas syringae pv. tomato (strain ATCC BAA-871 / DC3000).